We begin with the raw amino-acid sequence, 422 residues long: Monoacylglycerol lipase ABHD2 (422 aa).

The Cytoplasmic portion of the chain corresponds to 1-15 (MSAQLEADVRTMSPE). The chain crosses the membrane as a helical; Signal-anchor for type II membrane protein span at residues 16-36 (MPAMFDGMKLAAVAAVLYVIV). Over 37–422 (RSLNLKCPTA…HKPQCHQQKE (386 aa)) the chain is Extracellular. The 252-residue stretch at 134 to 385 (MVICPGIGNH…HGGHLGFFEG (252 aa)) folds into the AB hydrolase-1 domain. The N-linked (GlcNAc...) asparagine glycan is linked to Asn142. Ser213 serves as the catalytic Nucleophile. Residues Asn285, Asn335, and Asn344 are each glycosylated (N-linked (GlcNAc...) asparagine). Catalysis depends on charge relay system residues Asp348 and His379.

The protein belongs to the AB hydrolase superfamily. AB hydrolase 4 family.

The protein resides in the cell membrane. It catalyses the reaction Hydrolyzes glycerol monoesters of long-chain fatty acids.. It carries out the reaction an acetyl ester + H2O = an aliphatic alcohol + acetate + H(+). The enzyme catalyses a triacylglycerol + H2O = a diacylglycerol + a fatty acid + H(+). The catalysed reaction is 2-(5Z,8Z,11Z,14Z-eicosatetraenoyl)-glycerol + H2O = glycerol + (5Z,8Z,11Z,14Z)-eicosatetraenoate + H(+). It catalyses the reaction a butanoate ester + H2O = an aliphatic alcohol + butanoate + H(+). It carries out the reaction hexadecanoate ester + H2O = an aliphatic alcohol + hexadecanoate + H(+). Its activity is regulated as follows. Acylglycerol lipase activity is activated upon binding to progesterone. Functionally, progesterone-dependent acylglycerol lipase that catalyzes hydrolysis of endocannabinoid arachidonoylglycerol (AG) from cell membrane. Acts as a progesterone receptor: progesterone-binding activates the acylglycerol lipase activity, mediating degradation of 1-arachidonoylglycerol (1AG) and 2-arachidonoylglycerol (2AG) to glycerol and arachidonic acid (AA). Also displays an ester hydrolase activity against acetyl ester, butanoate ester and hexadecanoate ester. Plays a key role in sperm capacitation in response to progesterone by mediating degradation of 2AG, an inhibitor of the sperm calcium channel CatSper, leading to calcium influx via CatSper and sperm activation. May also play a role in smooth muscle cells migration. The sequence is that of Monoacylglycerol lipase ABHD2 (abhd2b) from Danio rerio (Zebrafish).